A 152-amino-acid polypeptide reads, in one-letter code: MSQLCPCGSAVEYSLCCHPYVSGEKVAPDPEHLMRSRYCAFVMQDADYLIKTWHPSCGAAALRAELIAGFAHTEWLGLTVFEHCWQDADNIGFVSFVARFTEGGKTGAIIERSRFLKENGQWYYIDGTRPQFGRNDPCPCGSGKKFKKCCGQ.

This sequence belongs to the UPF0225 family.

The chain is UPF0225 protein YchJ from Escherichia coli O139:H28 (strain E24377A / ETEC).